Here is a 223-residue protein sequence, read N- to C-terminus: 2-C-methyl-D-erythritol 4-phosphate cytidylyltransferase (223 aa).

The protein belongs to the IspD/TarI cytidylyltransferase family. IspD subfamily.

The enzyme catalyses 2-C-methyl-D-erythritol 4-phosphate + CTP + H(+) = 4-CDP-2-C-methyl-D-erythritol + diphosphate. It functions in the pathway isoprenoid biosynthesis; isopentenyl diphosphate biosynthesis via DXP pathway; isopentenyl diphosphate from 1-deoxy-D-xylulose 5-phosphate: step 2/6. Functionally, catalyzes the formation of 4-diphosphocytidyl-2-C-methyl-D-erythritol from CTP and 2-C-methyl-D-erythritol 4-phosphate (MEP). In Prochlorococcus marinus (strain MIT 9215), this protein is 2-C-methyl-D-erythritol 4-phosphate cytidylyltransferase.